Consider the following 65-residue polypeptide: MVGVQLMDNETIDKLLKRFKKKYERAGVLKEFRKRAYYTKPSVDDRLKRARSKRRAQRANEESNA.

The interval 43 to 65 is disordered; sequence VDDRLKRARSKRRAQRANEESNA. Residues 48–57 are compositionally biased toward basic residues; the sequence is KRARSKRRAQ.

The protein belongs to the bacterial ribosomal protein bS21 family.

The polypeptide is Small ribosomal subunit protein bS21 (Chloroherpeton thalassium (strain ATCC 35110 / GB-78)).